Consider the following 61-residue polypeptide: MSNAKTVKVTLVKSLIGRLESHKACARGLGLKKIRQTVEVLDTPENRGMINKISYLLKFEG.

The protein belongs to the universal ribosomal protein uL30 family. Part of the 50S ribosomal subunit.

The sequence is that of Large ribosomal subunit protein uL30 from Chromobacterium violaceum (strain ATCC 12472 / DSM 30191 / JCM 1249 / CCUG 213 / NBRC 12614 / NCIMB 9131 / NCTC 9757 / MK).